Reading from the N-terminus, the 228-residue chain is Phosphatidate cytidylyltransferase (228 aa).

6 consecutive transmembrane segments (helical) span residues 31–51 (FVIA…LVGL), 65–85 (INYL…LIFL), 93–113 (LVIM…MIGG), 131–151 (WTGL…VSLI), 165–185 (IYLF…DLFI), and 206–226 (GVLD…CINI).

This sequence belongs to the CDS family.

The protein localises to the cell membrane. It carries out the reaction a 1,2-diacyl-sn-glycero-3-phosphate + CTP + H(+) = a CDP-1,2-diacyl-sn-glycerol + diphosphate. It participates in phospholipid metabolism; CDP-diacylglycerol biosynthesis; CDP-diacylglycerol from sn-glycerol 3-phosphate: step 3/3. The sequence is that of Phosphatidate cytidylyltransferase (cdsA) from Rickettsia prowazekii (strain Madrid E).